Here is a 403-residue protein sequence, read N- to C-terminus: Aminomethyltransferase, mitochondrial (403 aa).

The N-terminal 28 residues, M1–C28, are a transit peptide targeting the mitochondrion. Positions 232, 261, and 399 each coordinate substrate.

The protein belongs to the GcvT family. As to quaternary structure, the glycine cleavage system is composed of four proteins: P, T, L and H.

The protein localises to the mitochondrion. It carries out the reaction N(6)-[(R)-S(8)-aminomethyldihydrolipoyl]-L-lysyl-[protein] + (6S)-5,6,7,8-tetrahydrofolate = N(6)-[(R)-dihydrolipoyl]-L-lysyl-[protein] + (6R)-5,10-methylene-5,6,7,8-tetrahydrofolate + NH4(+). Its function is as follows. The glycine cleavage system catalyzes the degradation of glycine. This Homo sapiens (Human) protein is Aminomethyltransferase, mitochondrial.